Consider the following 253-residue polypeptide: Phosphate import ATP-binding protein PstB 1 (253 aa).

The ABC transporter domain maps to 7–248; the sequence is LQIRDLSVYY…PKRKETEDYI (242 aa). ATP is bound at residue 39 to 46; it reads GPSGSGKS.

The protein belongs to the ABC transporter superfamily. Phosphate importer (TC 3.A.1.7) family. The complex is composed of two ATP-binding proteins (PstB), two transmembrane proteins (PstC and PstA) and a solute-binding protein (PstS).

It is found in the cell membrane. It carries out the reaction phosphate(out) + ATP + H2O = ADP + 2 phosphate(in) + H(+). In terms of biological role, part of the ABC transporter complex PstSACB involved in phosphate import. Responsible for energy coupling to the transport system. The sequence is that of Phosphate import ATP-binding protein PstB 1 from Streptococcus pyogenes serotype M12 (strain MGAS9429).